We begin with the raw amino-acid sequence, 81 residues long: RNA-binding protein Hfq (81 aa).

One can recognise a Sm domain in the interval aspartate 11–isoleucine 71.

This sequence belongs to the Hfq family. Homohexamer.

Functionally, RNA chaperone that binds small regulatory RNA (sRNAs) and mRNAs to facilitate mRNA translational regulation in response to envelope stress, environmental stress and changes in metabolite concentrations. Also binds with high specificity to tRNAs. This chain is RNA-binding protein Hfq, found in Clostridium acetobutylicum (strain ATCC 824 / DSM 792 / JCM 1419 / IAM 19013 / LMG 5710 / NBRC 13948 / NRRL B-527 / VKM B-1787 / 2291 / W).